The following is a 173-amino-acid chain: Aliphatic sulfonate oxidoreductase, polyferredoxin-like subunit (173 aa).

3 consecutive 4Fe-4S ferredoxin-type domains span residues 9-40, 48-80, and 82-111; these read IWILITPDKCSGCRLCEVTCSLEHEGIIWPEA, LFPGINVPHTCVQCPDYPCVNACPTNALSVDEK, and GAVVVNEEKCITCGACVLACPGKVPRIPAG. [4Fe-4S] cluster contacts are provided by Cys-18, Cys-21, Cys-24, Cys-28, Cys-58, Cys-61, Cys-66, Cys-70, Cys-91, Cys-94, Cys-97, Cys-101, Cys-118, Cys-121, Cys-127, and Cys-131.

In terms of assembly, heterodimer composed of a small WOR5-S subunit, with four [4Fe-4S] clusters, and a large WOR5-L subunit, containing the active site tungsto-bispyranopterin cofactor as well as another [4Fe-4S] cluster. It depends on [4Fe-4S] cluster as a cofactor.

The protein localises to the cytoplasm. Polyferredoxin-like subunit of an oxidoreductase that can desulfonate and oxidize aliphatic sulfonates such as taurine. May serve as a an electron-transfer subunit between the catalytic subunit and ferredoxin. The chain is Aliphatic sulfonate oxidoreductase, polyferredoxin-like subunit from Pyrococcus furiosus (strain ATCC 43587 / DSM 3638 / JCM 8422 / Vc1).